Here is a 1109-residue protein sequence, read N- to C-terminus: Pesticidal crystal protein Cry28Aa (1109 aa).

The protein belongs to the delta endotoxin family.

Promotes colloidosmotic lysis by binding to the midgut epithelial cells of insects. This chain is Pesticidal crystal protein Cry28Aa (cry28Aa), found in Bacillus thuringiensis subsp. finitimus.